We begin with the raw amino-acid sequence, 869 residues long: Bifunctional uridylyltransferase/uridylyl-removing enzyme (869 aa).

Residues methionine 1–serine 332 form a uridylyltransferase region. The tract at residues leucine 333–leucine 691 is uridylyl-removing. The region spanning valine 450–leucine 572 is the HD domain. 2 consecutive ACT domains span residues glutamate 692–proline 774 and arginine 798–valine 869.

Belongs to the GlnD family. It depends on Mg(2+) as a cofactor.

It carries out the reaction [protein-PII]-L-tyrosine + UTP = [protein-PII]-uridylyl-L-tyrosine + diphosphate. The enzyme catalyses [protein-PII]-uridylyl-L-tyrosine + H2O = [protein-PII]-L-tyrosine + UMP + H(+). Uridylyltransferase (UTase) activity is inhibited by glutamine, while glutamine activates uridylyl-removing (UR) activity. Modifies, by uridylylation and deuridylylation, the PII regulatory proteins (GlnB and homologs), in response to the nitrogen status of the cell that GlnD senses through the glutamine level. Under low glutamine levels, catalyzes the conversion of the PII proteins and UTP to PII-UMP and PPi, while under higher glutamine levels, GlnD hydrolyzes PII-UMP to PII and UMP (deuridylylation). Thus, controls uridylylation state and activity of the PII proteins, and plays an important role in the regulation of nitrogen assimilation and metabolism. This Xanthomonas oryzae pv. oryzae (strain MAFF 311018) protein is Bifunctional uridylyltransferase/uridylyl-removing enzyme.